A 123-amino-acid chain; its full sequence is Small ribosomal subunit protein uS12 (123 aa).

Position 89 is a 3-methylthioaspartic acid (D89).

This sequence belongs to the universal ribosomal protein uS12 family. Part of the 30S ribosomal subunit. Contacts proteins S8 and S17. May interact with IF1 in the 30S initiation complex.

Its function is as follows. With S4 and S5 plays an important role in translational accuracy. Functionally, interacts with and stabilizes bases of the 16S rRNA that are involved in tRNA selection in the A site and with the mRNA backbone. Located at the interface of the 30S and 50S subunits, it traverses the body of the 30S subunit contacting proteins on the other side and probably holding the rRNA structure together. The combined cluster of proteins S8, S12 and S17 appears to hold together the shoulder and platform of the 30S subunit. This Syntrophotalea carbinolica (strain DSM 2380 / NBRC 103641 / GraBd1) (Pelobacter carbinolicus) protein is Small ribosomal subunit protein uS12.